Here is a 374-residue protein sequence, read N- to C-terminus: Alcohol dehydrogenase 1 (374 aa).

N-acetylserine is present on Ser1. The Zn(2+) site is built by Cys46, His67, Cys97, Cys100, Cys103, Cys111, and Cys174. NAD(+) contacts are provided by residues 199-204 (GLGGVG), Asp223, Lys228, 292-294 (VGV), and Arg369.

This sequence belongs to the zinc-containing alcohol dehydrogenase family. Class-I subfamily. Homodimer. Requires Zn(2+) as cofactor.

The protein resides in the cytoplasm. It catalyses the reaction a primary alcohol + NAD(+) = an aldehyde + NADH + H(+). It carries out the reaction a secondary alcohol + NAD(+) = a ketone + NADH + H(+). The protein is Alcohol dehydrogenase 1 (ADH1) of Struthio camelus (Common ostrich).